Consider the following 268-residue polypeptide: Exopolysaccharide production negative regulator (268 aa).

Residues 1–22 (MRAGELKSLRVAVLGMSLAVGA) form the signal peptide.

Functionally, negatively modulates exopolysaccharide (EPS) biosynthesis. The sequence is that of Exopolysaccharide production negative regulator (exoR) from Rhizobium meliloti (strain 1021) (Ensifer meliloti).